A 143-amino-acid polypeptide reads, in one-letter code: MKTFSAKPHEVKREWFVIDAQDKVLGRVATEVASRLRGKHKPEYTPHVDTGDYIIVINADKLRVTGAKFEDKKYFRHSGFPGGIYERTFREMQDQFPGRALEQAVKGMLPKGPLGYAMIKKLKVYAGAEHAHAAQQPKVLELK.

It belongs to the universal ribosomal protein uL13 family. In terms of assembly, part of the 50S ribosomal subunit.

Functionally, this protein is one of the early assembly proteins of the 50S ribosomal subunit, although it is not seen to bind rRNA by itself. It is important during the early stages of 50S assembly. In Neisseria gonorrhoeae (strain ATCC 700825 / FA 1090), this protein is Large ribosomal subunit protein uL13.